Reading from the N-terminus, the 380-residue chain is Phospho-N-acetylmuramoyl-pentapeptide-transferase (380 aa).

Helical transmembrane passes span 26-46 (IVAA…IFIE), 75-95 (MGGA…ADLA), 98-118 (FVWA…TDDW), 135-155 (LVLQ…DWRF), 161-181 (FPWV…FVPS), 183-203 (LFNP…VIAT), 222-242 (VVSA…IAGF), 259-279 (LGVF…YNTY), 283-303 (VFMG…MAVL), 311-331 (AILH…VWSF), and 357-377 (KIIV…LLSI).

Belongs to the glycosyltransferase 4 family. MraY subfamily. Mg(2+) serves as cofactor.

It localises to the cell inner membrane. The catalysed reaction is UDP-N-acetyl-alpha-D-muramoyl-L-alanyl-gamma-D-glutamyl-meso-2,6-diaminopimeloyl-D-alanyl-D-alanine + di-trans,octa-cis-undecaprenyl phosphate = di-trans,octa-cis-undecaprenyl diphospho-N-acetyl-alpha-D-muramoyl-L-alanyl-D-glutamyl-meso-2,6-diaminopimeloyl-D-alanyl-D-alanine + UMP. The protein operates within cell wall biogenesis; peptidoglycan biosynthesis. In terms of biological role, catalyzes the initial step of the lipid cycle reactions in the biosynthesis of the cell wall peptidoglycan: transfers peptidoglycan precursor phospho-MurNAc-pentapeptide from UDP-MurNAc-pentapeptide onto the lipid carrier undecaprenyl phosphate, yielding undecaprenyl-pyrophosphoryl-MurNAc-pentapeptide, known as lipid I. The chain is Phospho-N-acetylmuramoyl-pentapeptide-transferase from Anaeromyxobacter dehalogenans (strain 2CP-1 / ATCC BAA-258).